The following is a 231-amino-acid chain: Ribosomal RNA large subunit methyltransferase E (231 aa).

Positions 76, 78, 99, 115, and 139 each coordinate S-adenosyl-L-methionine. Lys179 serves as the catalytic Proton acceptor.

Belongs to the class I-like SAM-binding methyltransferase superfamily. RNA methyltransferase RlmE family.

The protein resides in the cytoplasm. It carries out the reaction uridine(2552) in 23S rRNA + S-adenosyl-L-methionine = 2'-O-methyluridine(2552) in 23S rRNA + S-adenosyl-L-homocysteine + H(+). In terms of biological role, specifically methylates the uridine in position 2552 of 23S rRNA at the 2'-O position of the ribose in the fully assembled 50S ribosomal subunit. The sequence is that of Ribosomal RNA large subunit methyltransferase E from Bradyrhizobium sp. (strain BTAi1 / ATCC BAA-1182).